Reading from the N-terminus, the 1456-residue chain is Retrovirus-related Pol polyprotein from transposon RE2 (1456 aa).

The interval 205–252 (NVVTHRNTNTNRNQNNRGDNRNYNNNNNRSNSWQPSSSGSRSDNRQPK) is disordered. Residues 210–245 (RNTNTNRNQNNRGDNRNYNNNNNRSNSWQPSSSGSR) are compositionally biased toward low complexity. The segment at 257–273 (RCQICSVQGHSAKRCPQ) adopts a CCHC-type zinc-finger fold. Residues 276–291 (QFQSTTNQQQSTSPFT) show a composition bias toward low complexity. The interval 276–295 (QFQSTTNQQQSTSPFTPWQP) is disordered. The For protease activity role is filled by Asp313. In terms of domain architecture, Integrase catalytic spans 498–661 (TSSKPLEYIY…SPFQKLFGQP (164 aa)). 2 residues coordinate Mg(2+): Asp509 and Asp571. Residues 738-754 (STSQEQRSDSAPNWPSH) show a composition bias toward polar residues. A disordered region spans residues 738 to 896 (STSQEQRSDS…PPLPPVLPAP (159 aa)). A compositionally biased stretch (low complexity) spans 793 to 814 (SSSNLPSSSISSPSSSEPTAPS). The segment covering 816 to 827 (NGPQPTAQPHQT) has biased composition (polar residues). 2 stretches are compositionally biased toward low complexity: residues 828 to 841 (QNSN…NNPN) and 849 to 886 (SPNQ…STST). Over residues 887 to 896 (PPLPPVLPAP) the composition is skewed to pro residues. Positions 965-1208 (NHTWDLVPPP…LTAKPVATPM (244 aa)) constitute a Reverse transcriptase Ty1/copia-type domain.

It carries out the reaction DNA(n) + a 2'-deoxyribonucleoside 5'-triphosphate = DNA(n+1) + diphosphate. The chain is Retrovirus-related Pol polyprotein from transposon RE2 (RE2) from Arabidopsis thaliana (Mouse-ear cress).